A 692-amino-acid chain; its full sequence is E3 ubiquitin-protein ligase brl1 (692 aa).

Positions 302–370 (SNEEKIESIN…RNERDSLVAK (69 aa)) form a coiled coil. An RING-type zinc finger spans residues 639 to 679 (CSVCNFSNWKSKLIPNCGHAFCSNCMEPFYEHKTSTCPQCE).

It belongs to the BRE1 family. Component of the histone H2B ubiquitin ligase complex (HULC) composed of at least brl1, brl2, rhp6 and shf1.

The protein localises to the nucleus. The enzyme catalyses S-ubiquitinyl-[E2 ubiquitin-conjugating enzyme]-L-cysteine + [acceptor protein]-L-lysine = [E2 ubiquitin-conjugating enzyme]-L-cysteine + N(6)-ubiquitinyl-[acceptor protein]-L-lysine.. Its pathway is protein modification; protein ubiquitination. In terms of biological role, E3 ubiquitin-protein ligase which belongs to the histone H2B ubiquitin ligase complex (HULC) which mediates monoubiquitination of histone H2B to form H2BK123ub1. H2BK123ub1 gives a specific tag for epigenetic transcriptional activation and is also a prerequisite for H3K4me and H3K79me formation. The chain is E3 ubiquitin-protein ligase brl1 (brl1) from Schizosaccharomyces pombe (strain 972 / ATCC 24843) (Fission yeast).